The chain runs to 1788 residues: Laminin subunit beta-1 (1788 aa).

Residues 1 to 24 form the signal peptide; that stretch reads MLELRLIVVIVLALLSWQWDPVDS. A disordered region spans residues 23 to 43; sequence DSQRPPQHGRRDRPKYPPNKF. A Laminin N-terminal domain is found at 50–287; sequence ERSSCYPATG…GISNMVVRGS (238 aa). 3 N-linked (GlcNAc...) asparagine glycosylation sites follow: Asn138, Asn201, and Asn232. Intrachain disulfides connect Cys288–Cys297, Cys290–Cys318, Cys320–Cys329, Cys332–Cys352, Cys355–Cys364, Cys357–Cys382, Cys385–Cys394, Cys397–Cys415, Cys418–Cys431, Cys420–Cys446, Cys448–Cys457, Cys460–Cys475, Cys478–Cys491, Cys480–Cys498, Cys500–Cys509, Cys512–Cys526, Cys529–Cys541, Cys531–Cys548, and Cys550–Cys559. Laminin EGF-like domains are found at residues 288 to 354, 355 to 417, 418 to 477, and 478 to 528; these read CSCY…ACKK, CECN…VCQP, CDCD…GCEP, and CTCN…GCSL. Asn487 carries an N-linked (GlcNAc...) asparagine glycan. Residues 529-559 form the Laminin EGF-like 5; truncated domain; sequence CNCDAGGSYDNYCDVISGQCRCRPHMTGRSC. A Laminin IV type B domain is found at 567 to 783; it reads FIPLLPEVHE…LDNILSVFVH (217 aa). Asn591 carries N-linked (GlcNAc...) asparagine glycosylation. The Cell attachment site motif lies at 641–643; sequence RGD. Disulfide bonds link Cys789/Cys801, Cys791/Cys808, Cys810/Cys819, Cys822/Cys834, Cys837/Cys849, Cys839/Cys856, Cys858/Cys867, Cys870/Cys880, Cys883/Cys892, Cys885/Cys899, Cys902/Cys911, Cys914/Cys930, Cys933/Cys949, Cys935/Cys960, Cys962/Cys971, Cys974/Cys988, Cys991/Cys1005, Cys993/Cys1012, Cys1015/Cys1024, Cys1027/Cys1040, Cys1043/Cys1057, Cys1045/Cys1064, Cys1066/Cys1075, Cys1078/Cys1091, Cys1094/Cys1106, Cys1096/Cys1113, Cys1115/Cys1124, Cys1127/Cys1139, Cys1142/Cys1154, Cys1144/Cys1161, Cys1163/Cys1172, and Cys1175/Cys1186. 8 Laminin EGF-like domains span residues 789 to 836, 837 to 882, 883 to 932, 933 to 990, 991 to 1042, 1043 to 1093, 1094 to 1141, and 1142 to 1188; these read CNCN…GCKA, CDCN…ECRV, CQCN…GCRP, CRCP…TCSK, CECS…NCQQ, CECD…GCES, CNCD…KCQP, and CECD…HCSP. Asn1051 carries N-linked (GlcNAc...) asparagine glycosylation. The domain II stretch occupies residues 1189 to 1405; the sequence is CGECFNNWDL…SQIPELNNQV (217 aa). N-linked (GlcNAc...) asparagine glycans are attached at residues Asn1246, Asn1301, Asn1330, and Asn1341. Residues 1255-1405 adopt a coiled-coil conformation; that stretch reads EKLDYETQSL…SQIPELNNQV (151 aa). The interval 1406–1432 is domain alpha; it reads CGKPGDPCDSLCGGAGCGHCGGFLSCE. The interval 1433-1788 is domain I; it reads HGAKTHSEEA…RGSHYRQCYT (356 aa). The stretch at 1453–1505 forms a coiled coil; that stretch reads ITSKKDQADQTIRALTQAKLNASEAYEKAKRGFEQSERYLNQTNANIKLAENL. N-linked (GlcNAc...) asparagine glycosylation is found at Asn1473, Asn1493, and Asn1515. A coiled-coil region spans residues 1540–1561; sequence EEIETLGDQINRAVSSLKNVEA. N-linked (GlcNAc...) asparagine glycans are attached at residues Asn1581, Asn1644, and Asn1703. Residues 1608 to 1762 adopt a coiled-coil conformation; that stretch reads QGKAKDAIQQ…QQLLRLQAEI (155 aa). A disordered region spans residues 1690–1719; sequence GEANNLQSATSATNQTLTDRASRSENARER. Over residues 1693–1708 the composition is skewed to polar residues; sequence NNLQSATSATNQTLTD. The segment covering 1709–1719 has biased composition (basic and acidic residues); the sequence is RASRSENARER.

In terms of assembly, laminin is a complex glycoprotein, consisting of three different polypeptide chains (alpha, beta, gamma), which are bound to each other by disulfide bonds into a cross-shaped molecule comprising one long and three short arms with globules at each end. As to expression, found in the basement membranes (major component).

It is found in the secreted. It localises to the extracellular space. The protein localises to the extracellular matrix. Its subcellular location is the basement membrane. Functionally, binding to cells via a high affinity receptor, laminin is thought to mediate the attachment, migration and organization of cells into tissues during embryonic development by interacting with other extracellular matrix components. Required for Ndg localization to the basement membrane. This chain is Laminin subunit beta-1 (LanB1), found in Drosophila melanogaster (Fruit fly).